A 263-amino-acid polypeptide reads, in one-letter code: Ubiquinone/menaquinone biosynthesis C-methyltransferase UbiE (263 aa).

3 residues coordinate S-adenosyl-L-methionine: Thr-86, Asp-107, and Ser-152.

It belongs to the class I-like SAM-binding methyltransferase superfamily. MenG/UbiE family.

The catalysed reaction is a 2-demethylmenaquinol + S-adenosyl-L-methionine = a menaquinol + S-adenosyl-L-homocysteine + H(+). It catalyses the reaction a 2-methoxy-6-(all-trans-polyprenyl)benzene-1,4-diol + S-adenosyl-L-methionine = a 5-methoxy-2-methyl-3-(all-trans-polyprenyl)benzene-1,4-diol + S-adenosyl-L-homocysteine + H(+). Its pathway is quinol/quinone metabolism; menaquinone biosynthesis; menaquinol from 1,4-dihydroxy-2-naphthoate: step 2/2. It participates in cofactor biosynthesis; ubiquinone biosynthesis. In terms of biological role, methyltransferase required for the conversion of demethylmenaquinol (DMKH2) to menaquinol (MKH2) and the conversion of 2-polyprenyl-6-methoxy-1,4-benzoquinol (DDMQH2) to 2-polyprenyl-3-methyl-6-methoxy-1,4-benzoquinol (DMQH2). In Brucella anthropi (strain ATCC 49188 / DSM 6882 / CCUG 24695 / JCM 21032 / LMG 3331 / NBRC 15819 / NCTC 12168 / Alc 37) (Ochrobactrum anthropi), this protein is Ubiquinone/menaquinone biosynthesis C-methyltransferase UbiE.